Reading from the N-terminus, the 369-residue chain is Flagellar P-ring protein (369 aa).

The first 23 residues, 1–23, serve as a signal peptide directing secretion; it reads MRIASFFTVLLTLLTLNITPASA.

Belongs to the FlgI family. As to quaternary structure, the basal body constitutes a major portion of the flagellar organelle and consists of four rings (L,P,S, and M) mounted on a central rod.

It localises to the periplasm. The protein resides in the bacterial flagellum basal body. Assembles around the rod to form the L-ring and probably protects the motor/basal body from shearing forces during rotation. The chain is Flagellar P-ring protein from Pectobacterium atrosepticum (strain SCRI 1043 / ATCC BAA-672) (Erwinia carotovora subsp. atroseptica).